The sequence spans 1055 residues: Cell-division control histidine kinase PdhS (1055 aa).

The segment at 1–626 (MSGSYPFIDI…RANGSEEPVD (626 aa)) is important for polar localization. The disordered stretch occupies residues 419-439 (DDSPVATLPKPPLDIAPTPGR). The interval 627-1055 (AHLNAISWRE…AFPPTRVLAD (429 aa)) is interaction with DivK. Residues 679–750 (HVEELKTILD…YLHGLSGNGV (72 aa)) enclose the PAS domain. The region spanning 822-1051 (RISHEIRTPL…VVEIAFPPTR (230 aa)) is the Histidine kinase domain. The residue at position 825 (histidine 825) is a Phosphohistidine; by autocatalysis.

As to quaternary structure, interacts with DivK.

The protein resides in the cytoplasm. The enzyme catalyses ATP + protein L-histidine = ADP + protein N-phospho-L-histidine.. In terms of biological role, functions as a polar differentiation marker. Essential protein that, by localizing in the old pole of dividing cells, controls cell division and maturation, probably through control of DivK phosphorylation status and cellular distribution, which in turn regulates CtrA, a transcriptional regulator of the minB operon. The asymmetrical localization of this protein is probably required for cells to enter a new division cycle. The sequence is that of Cell-division control histidine kinase PdhS (pdhS) from Brucella anthropi (strain ATCC 49188 / DSM 6882 / CCUG 24695 / JCM 21032 / LMG 3331 / NBRC 15819 / NCTC 12168 / Alc 37) (Ochrobactrum anthropi).